We begin with the raw amino-acid sequence, 143 residues long: Large ribosomal subunit protein eL28y (143 aa).

Belongs to the eukaryotic ribosomal protein eL28 family.

This is Large ribosomal subunit protein eL28y (RPL28C) from Arabidopsis thaliana (Mouse-ear cress).